A 305-amino-acid chain; its full sequence is Methionyl-tRNA formyltransferase (305 aa).

111 to 114 is a binding site for (6S)-5,6,7,8-tetrahydrofolate; sequence SILP.

The protein belongs to the Fmt family.

It catalyses the reaction L-methionyl-tRNA(fMet) + (6R)-10-formyltetrahydrofolate = N-formyl-L-methionyl-tRNA(fMet) + (6S)-5,6,7,8-tetrahydrofolate + H(+). Functionally, attaches a formyl group to the free amino group of methionyl-tRNA(fMet). The formyl group appears to play a dual role in the initiator identity of N-formylmethionyl-tRNA by promoting its recognition by IF2 and preventing the misappropriation of this tRNA by the elongation apparatus. This is Methionyl-tRNA formyltransferase from Wolinella succinogenes (strain ATCC 29543 / DSM 1740 / CCUG 13145 / JCM 31913 / LMG 7466 / NCTC 11488 / FDC 602W) (Vibrio succinogenes).